The primary structure comprises 595 residues: Estrogen receptor (595 aa).

The interval 1 to 184 is modulating (transactivation AF-1); mediates interaction with MACROD1; sequence MTMTLHTKAS…AMESAKETRY (184 aa). O-linked (GlcNAc) serine glycosylation occurs at Ser10. The tract at residues 35-47 is required for interaction with NCOA1; it reads LERPLGEVYVDGS. An interaction with DDX5; self-association region spans residues 35 to 174; it reads LERPLGEVYV…LASTGDKGSM (140 aa). Residues Ser104 and Ser106 each carry the phosphoserine; by CDK2 modification. Ser118 carries the post-translational modification Phosphoserine. Residues 149-173 are disordered; sequence FYRPTSDNRRQSGRERLASTGDKGS. Positions 154–165 are enriched in basic and acidic residues; that stretch reads SDNRRQSGRERL. Ser167 carries the phosphoserine; by CK2 modification. 2 consecutive NR C4-type zinc fingers follow at residues 185–205 and 221–245; these read CAVCNDYASGYHYGVWSCEGC and CPATNQCTIDKNRRKSCQACRLRKC. The segment at residues 185 to 250 is a DNA-binding region (nuclear receptor); sequence CAVCNDYASG…RLRKCYEVGM (66 aa). The interval 185 to 310 is mediates interaction with DNTTIP2; the sequence is CAVCNDYASG…TKKNSPALSL (126 aa). A hinge region spans residues 251-310; sequence MKGGIRKDRRGGRMLKHKRQRDEGEGRNEVGSSGDVRASNLWPSPLLIKHTKKNSPALSL. Over residues 257-269 the composition is skewed to basic residues; it reads KDRRGGRMLKHKR. The segment at 257–287 is disordered; sequence KDRRGGRMLKHKRQRDEGEGRNEVGSSGDVR. An Asymmetric dimethylarginine; by PRMT1 modification is found at Arg260. Residues 262–595 form an interaction with AKAP13 region; the sequence is GRMLKHKRQR…EEAGAFPTTV (334 aa). The segment at 264-595 is self-association; sequence MLKHKRQRDE…EEAGAFPTTV (332 aa). Positions 311–547 constitute an NR LBD domain; it reads TADQMVSALL…DLLLEMLDAH (237 aa). A transactivation AF-2 region spans residues 311–595; the sequence is TADQMVSALL…EEAGAFPTTV (285 aa). 2 residues coordinate 17beta-estradiol: Glu353 and Arg394. A lipid anchor (S-palmitoyl cysteine) is attached at Cys447. Residue His524 coordinates 17beta-estradiol. Tyr537 is subject to Phosphotyrosine; by Tyr-kinases. The O-linked (GlcNAc) threonine glycan is linked to Thr571.

The protein belongs to the nuclear hormone receptor family. NR3 subfamily. As to quaternary structure, binds DNA as a homodimer. Can form a heterodimer with ESR2. Interacts with coactivator NCOA5. Interacts with PELP1, the interaction is enhanced by 17-beta-estradiol; the interaction increases ESR1 transcriptional activity. Interacts with NCOA7; the interaction is ligand-inducible. Interacts with AKAP13, CUEDC2, HEXIM1, KDM5A, MAP1S, SMARD1, and UBE1C. Interacts with MUC1; the interaction is stimulated by 7 beta-estradiol (E2) and enhances ESR1-mediated transcription. Interacts with DNTTIP2, and UIMC1. Interacts with KMT2D/MLL2. Interacts with ATAD2; the interaction is enhanced by estradiol. Interacts with KIF18A and LDB1. Interacts with RLIM (via its C-terminus). Interacts with MACROD1. Interacts with SH2D4A and PLCG. Interacts with SH2D4A; the interaction blocks binding to PLCG and inhibits estrogen-induced cell proliferation. Interacts with DYNLL1. Interacts with CCDC62; the interaction requires estradiol and appears to enhance the transcription of target genes. Interacts with NR2C1; the interaction prevents homodimerization of ESR1 and suppresses its transcriptional activity and cell growth. Interacts with DNAAF4. Interacts with PRMT2. Interacts with RBFOX2. Interacts with EP300; the interaction is estrogen-dependent and enhanced by CITED1. Interacts with CITED1; the interaction is estrogen-dependent. Interacts with FAM120B, FOXL2, PHB2 and SLC30A9. Interacts with coactivators NCOA3 and NCOA6. Interacts with STK3/MST2 only in the presence of SAV1 and vice-versa. Binds to CSNK1D. Interacts with NCOA2; NCOA2 can interact with ESR1 AF-1 and AF-2 domains simultaneously and mediate their transcriptional synergy. Interacts with DDX5. Interacts with NCOA1; the interaction seems to require a self-association of N-terminal and C-terminal regions. Interacts with ZNF366, DDX17, NFKB1, RELA, SP1 and SP3. Interacts with NRIP1. Interacts with GPER1; the interaction occurs in an estrogen-dependent manner. Interacts with CLOCK and the interaction is stimulated by estrogen. Interacts with TRIP4 (ufmylated); estrogen dependent. Interacts with LMTK3; the interaction phosphorylates ESR1 (in vitro) and protects it against proteasomal degradation. Interacts with CCAR2 (via N-terminus) in a ligand-independent manner. Interacts with ZFHX3. Interacts with SFR1 in a ligand-dependent and -independent manner. Interacts with DCAF13, LATS1 and DCAF1; regulates ESR1 ubiquitination and ubiquitin-mediated proteasomal degradation. Interacts (via DNA-binding domain) with POU4F2 (C-terminus); this interaction increases the estrogen receptor ESR1 transcriptional activity in a DNA- and ligand 17-beta-estradiol-independent manner. Interacts with ESRRB isoform 1. Interacts with UBE3A and WBP2. Interacts with GTF2B. Interacts with RBM39. In the absence of hormonal ligand, interacts with TACC1. Interacts with PI3KR1 or PI3KR2 and PTK2/FAK1. Interacts with SRC. Interacts with BAG1; the interaction is promoted in the absence of estradiol (17-beta-estradiol/E2). Interacts with and ubiquitinated by STUB1; the interaction is promoted in the absence of estradiol (17-beta-estradiol/E2). Interacts with NEDD8. In terms of processing, ubiquitinated; regulated by LATS1 via DCAF1 it leads to ESR1 proteasomal degradation. Deubiquitinated by OTUB1. Ubiquitinated by STUB1/CHIP; in the CA1 hippocampal region following loss of endogenous circulating estradiol (17-beta-estradiol/E2). Ubiquitinated by UBR5, leading to its degradation: UBR5 specifically recognizes and binds ligand-bound ESR1 when it is not associated with coactivators (NCOAs). In presence of NCOAs, the UBR5-degron is not accessible, preventing its ubiquitination and degradation. Post-translationally, phosphorylated by cyclin A/CDK2 and CK1. Phosphorylation probably enhances transcriptional activity. Dephosphorylation at Ser-118 by PPP5C inhibits its transactivation activity. Phosphorylated by LMTK3 (in vitro). Palmitoylated at Cys-447 by ZDHHC7 and ZDHHC21. Palmitoylation is required for plasma membrane targeting and for rapid intracellular signaling via ERK and AKT kinases and cAMP generation, but not for signaling mediated by the nuclear hormone receptor. In terms of processing, dimethylated by PRMT1 at Arg-260. The methylation may favor cytoplasmic localization. Demethylated by JMJD6 at Arg-260.

The protein resides in the nucleus. Its subcellular location is the cytoplasm. It is found in the golgi apparatus. It localises to the cell membrane. Its function is as follows. Nuclear hormone receptor. The steroid hormones and their receptors are involved in the regulation of eukaryotic gene expression and affect cellular proliferation and differentiation in target tissues. Ligand-dependent nuclear transactivation involves either direct homodimer binding to a palindromic estrogen response element (ERE) sequence or association with other DNA-binding transcription factors, such as AP-1/c-Jun, c-Fos, ATF-2, Sp1 and Sp3, to mediate ERE-independent signaling. Ligand binding induces a conformational change allowing subsequent or combinatorial association with multiprotein coactivator complexes through LXXLL motifs of their respective components. Mutual transrepression occurs between the estrogen receptor (ER) and NF-kappa-B in a cell-type specific manner. Decreases NF-kappa-B DNA-binding activity and inhibits NF-kappa-B-mediated transcription from the IL6 promoter and displace RELA/p65 and associated coregulators from the promoter. Recruited to the NF-kappa-B response element of the CCL2 and IL8 promoters and can displace CREBBP. Present with NF-kappa-B components RELA/p65 and NFKB1/p50 on ERE sequences. Can also act synergistically with NF-kappa-B to activate transcription involving respective recruitment adjacent response elements; the function involves CREBBP. Can activate the transcriptional activity of TFF1. Also mediates membrane-initiated estrogen signaling involving various kinase cascades. Essential for MTA1-mediated transcriptional regulation of BRCA1 and BCAS3. Maintains neuronal survival in response to ischemic reperfusion injury when in the presence of circulating estradiol (17-beta-estradiol/E2). The chain is Estrogen receptor (ESR1) from Felis catus (Cat).